Reading from the N-terminus, the 187-residue chain is GTP cyclohydrolase 1 (187 aa).

Zn(2+)-binding residues include cysteine 76, histidine 79, and cysteine 148.

It belongs to the GTP cyclohydrolase I family. As to quaternary structure, homomer.

It catalyses the reaction GTP + H2O = 7,8-dihydroneopterin 3'-triphosphate + formate + H(+). It functions in the pathway cofactor biosynthesis; 7,8-dihydroneopterin triphosphate biosynthesis; 7,8-dihydroneopterin triphosphate from GTP: step 1/1. The chain is GTP cyclohydrolase 1 from Streptococcus gordonii (strain Challis / ATCC 35105 / BCRC 15272 / CH1 / DL1 / V288).